Consider the following 432-residue polypeptide: Type I restriction enzyme MjaIX specificity subunit (432 aa).

This sequence belongs to the type-I restriction system S methylase family. The type I restriction/modification system is composed of three polypeptides R, M and S.

The specificity (S) subunit of a type I restriction enzyme; this subunit dictates DNA sequence specificity. The M and S subunits together form a methyltransferase (MTase) that methylates A-3 on the top and A-2 on the bottom strand of the sequence 5'-CCAN(5)GTR-3'. In the presence of the R subunit the complex can also act as an endonuclease, binding to the same target sequence but cutting the DNA some distance from this site. Whether the DNA is cut or modified depends on the methylation state of the target sequence. When the target site is unmodified, the DNA is cut. When the target site is hemimethylated, the complex acts as a maintenance MTase modifying the DNA so that both strands become methylated. After locating a non-methylated recognition site, the enzyme complex serves as a molecular motor that translocates DNA in an ATP-dependent manner until a collision occurs that triggers cleavage. In Methanocaldococcus jannaschii (strain ATCC 43067 / DSM 2661 / JAL-1 / JCM 10045 / NBRC 100440) (Methanococcus jannaschii), this protein is Type I restriction enzyme MjaIX specificity subunit (hsdS).